The primary structure comprises 175 residues: Co-chaperone protein HscB homolog (175 aa).

One can recognise a J domain in the interval Asp8–Leu80.

Belongs to the HscB family. Interacts with HscA and stimulates its ATPase activity.

Functionally, co-chaperone involved in the maturation of iron-sulfur cluster-containing proteins. Seems to help targeting proteins to be folded toward HscA. This Chromobacterium violaceum (strain ATCC 12472 / DSM 30191 / JCM 1249 / CCUG 213 / NBRC 12614 / NCIMB 9131 / NCTC 9757 / MK) protein is Co-chaperone protein HscB homolog.